A 411-amino-acid chain; its full sequence is Serine hydroxymethyltransferase (411 aa).

(6S)-5,6,7,8-tetrahydrofolate-binding positions include Leu113 and 117-119 (GHL). N6-(pyridoxal phosphate)lysine is present on Lys222. (6S)-5,6,7,8-tetrahydrofolate contacts are provided by residues Glu238 and 346 to 348 (SPF).

This sequence belongs to the SHMT family. Homodimer. It depends on pyridoxal 5'-phosphate as a cofactor.

It is found in the cytoplasm. The enzyme catalyses (6R)-5,10-methylene-5,6,7,8-tetrahydrofolate + glycine + H2O = (6S)-5,6,7,8-tetrahydrofolate + L-serine. It participates in one-carbon metabolism; tetrahydrofolate interconversion. Its pathway is amino-acid biosynthesis; glycine biosynthesis; glycine from L-serine: step 1/1. In terms of biological role, catalyzes the reversible interconversion of serine and glycine with tetrahydrofolate (THF) serving as the one-carbon carrier. This reaction serves as the major source of one-carbon groups required for the biosynthesis of purines, thymidylate, methionine, and other important biomolecules. Also exhibits THF-independent aldolase activity toward beta-hydroxyamino acids, producing glycine and aldehydes, via a retro-aldol mechanism. The protein is Serine hydroxymethyltransferase of Prochlorococcus marinus (strain NATL1A).